The primary structure comprises 159 residues: Ribosomal RNA large subunit methyltransferase H (159 aa).

S-adenosyl-L-methionine-binding residues include leucine 76 and glycine 108.

It belongs to the RNA methyltransferase RlmH family. As to quaternary structure, homodimer.

The protein resides in the cytoplasm. It carries out the reaction pseudouridine(1915) in 23S rRNA + S-adenosyl-L-methionine = N(3)-methylpseudouridine(1915) in 23S rRNA + S-adenosyl-L-homocysteine + H(+). Functionally, specifically methylates the pseudouridine at position 1915 (m3Psi1915) in 23S rRNA. The chain is Ribosomal RNA large subunit methyltransferase H from Pediococcus pentosaceus (strain ATCC 25745 / CCUG 21536 / LMG 10740 / 183-1w).